A 431-amino-acid chain; its full sequence is Adenylosuccinate synthetase (431 aa).

Residues 13-19 (GDEGKGK) and 41-43 (GHT) each bind GTP. Asp14 serves as the catalytic Proton acceptor. Residues Asp14 and Gly41 each coordinate Mg(2+). Residues 14-17 (DEGK), 39-42 (NAGH), Thr130, Arg144, Gln225, Thr240, and Arg304 contribute to the IMP site. The Proton donor role is filled by His42. 300-306 (AVTGRPR) provides a ligand contact to substrate. Residues Arg306, 332-334 (KLD), and 415-417 (STG) each bind GTP.

Belongs to the adenylosuccinate synthetase family. In terms of assembly, homodimer. The cofactor is Mg(2+).

The protein resides in the cytoplasm. It carries out the reaction IMP + L-aspartate + GTP = N(6)-(1,2-dicarboxyethyl)-AMP + GDP + phosphate + 2 H(+). It participates in purine metabolism; AMP biosynthesis via de novo pathway; AMP from IMP: step 1/2. Functionally, plays an important role in the de novo pathway of purine nucleotide biosynthesis. Catalyzes the first committed step in the biosynthesis of AMP from IMP. The sequence is that of Adenylosuccinate synthetase from Legionella pneumophila subsp. pneumophila (strain Philadelphia 1 / ATCC 33152 / DSM 7513).